The following is a 272-amino-acid chain: Potassium channel regulatory protein (272 aa).

The 102-residue stretch at 5–106 folds into the BTB domain; that stretch reads ELVTLNVGGK…LLNPYLLQPR (102 aa).

As to quaternary structure, can form homooligomers. Interacts with KCNA1 (via cytoplasmic N-terminal domain) and KCNA4. Ubiquitous in normal tissues and expressed in some tumor tissues.

It localises to the endoplasmic reticulum. Inhibits potassium fluxes in cells. May regulate Kv1 family channel proteins by retaining a fraction of channels in endomembranes. This Homo sapiens (Human) protein is Potassium channel regulatory protein (KCNRG).